The chain runs to 793 residues: uncharacterized protein (793 aa).

Residues 1–22 (MKFKYGAIFFSGFLGLSAILAA) form the signal peptide. Residue Cys23 is the site of N-palmitoyl cysteine attachment. Residue Cys23 is the site of S-diacylglycerol cysteine attachment. 3 disordered regions span residues 181-200 (LNQK…TLTV), 212-264 (KIED…DDQV), and 444-504 (KAPS…SNNN). Positions 212–227 (KIEDSAKANGKSDEKG) are enriched in basic and acidic residues. Over residues 237-246 (ATFSLVQLKQ) the composition is skewed to polar residues. Over residues 247–264 (TQEKTDDSQDTKNSDDQV) the composition is skewed to basic and acidic residues. Over residues 449-468 (NGENGQTNEGNSTNGEQNLL) the composition is skewed to polar residues. Positions 472 to 485 (EVKDDSKPKEEVKS) are enriched in basic and acidic residues. Residues 491-504 (KESSQNQGKKSNNN) show a composition bias toward low complexity.

This sequence belongs to the MG185/MG260 family.

Its subcellular location is the cell membrane. This is an uncharacterized protein from Mycoplasma pneumoniae (strain ATCC 29342 / M129 / Subtype 1) (Mycoplasmoides pneumoniae).